The following is a 196-amino-acid chain: Calcium channel flower (196 aa).

Helical transmembrane passes span Leu-36–Ile-56, Ile-67–Glu-89, and Ala-114–Phe-134.

It belongs to the calcium channel flower family. As to quaternary structure, homomultimer. Associates with the dally/ magu complex.

It is found in the cell membrane. The protein localises to the cytoplasmic vesicle. It localises to the secretory vesicle. The protein resides in the synaptic vesicle membrane. Its subcellular location is the presynaptic cell membrane. It is found in the endosome. Channel activity is inhibited by La(3+), which reduces Ca(2+) influx and thus inhibits it's function in promoting activity-dependent bulk endocytosis (ADBE) in response to high stimuli. Its function is as follows. Transmembrane protein which mediates synaptic endocytosis, fitness-based cell culling, neuronal culling, morphogen gradient scaling, and calcium transport. Regulates synaptic endocytosis and hence couples exo- with endocytosis. Controls two major modes of synaptic vesicle (SV) endocytosis in the synaptic boutons of neuromuscular junctions (NMJs); Ca(2+) channel-independent Clathrin-mediated endocytosis (CME) in response to mild stimulation, and Ca(2+) channel-dependent activity-dependent bulk endocytosis (ADBE) in response to strong stimulation. Functions in ADBE and subsequent SV reformation from bulk endosomes by initiating Ca(2+) channel-dependent phosphatidylinositol 4,5-bisphosphate (PtdIns(4,5)P2) compartmentalization in synaptic boutons. There it acts at the periactive zone to provide the low Ca(2+) levels required to initiate Calcineurin activation and upregulate PtdIns(4,5)P2. Conversely PtdIns(4,5)P2 enhances fwe Ca(2+) channel-activity, establishing a positive feedback loop that induces PtdIns(4,5)P2 microdomain at the periactive zone. These microdomains trigger bulk membrane invagination (i.e. ADBE) by triggering actin polymerization while also promoting localization of fwe to bulk endosomes, thereby removing the ADBE trigger to reduce endocytosis and prevent excess membrane uptake. PtdIns(4,5)P2 then promotes SV reformation from the bulk endosomes, to coordinate ADBE and subsequent SV reformation. Different combinations of the flower isoforms at the cell membrane are also required for the identification and elimination of suboptimal or supernumerary cells during development, regeneration, and adulthood. Required for the recognition and elimination of unfit cells in the developing wing during cell competition. In the developing pupal retina, mediates the elimination of unwanted postmitotic neurons, including supernumerary photoreceptor neurons that form at the periphery of the retina and are contained within incomplete ommatidia units. Also required for efficient elimination and replacement of old neurons by newly generated neurons during regeneration in the adult brain following mechanical injury. Downstream of the flower fitness fingerprints, cells identified as unwanted or unfit are eliminated via apoptosis through the expression of ahuizotl (azot). However, the cells marked for elimination by the flower isoforms only undergo apoptosis if additional thresholds are met; (1) their neighboring fit/healthy cells express different levels of the fwe isoforms, and (2) the levels of the protective signal SPARC expressed by the loser or unwanted cells are unable to inhibit caspase activation. These additional thresholds for flower-mediated apoptosis, allows useful cells to recover from transient and limited stress before they are unnecessarily eliminated. Functions with dally and magu in a mechanism of scaling, which utilises apoptosis to ensure that the dpp morphogen gradient, which mediates organ growth, remains proportional to the size of the growing wing. In this mechanism, fwe represses dally- and Magu-dependent activity in expanding the gradient, and dally/Magu inhibits fwe-dependent apoptosis to keep cell death rate low. When the levels of these different proteins are optimally regulated the gradient correctly scales with organ growth but when this fails, fwe-mediated apoptosis is activated to trim the developing tissue to match the correct size of the gradient. This Drosophila virilis (Fruit fly) protein is Calcium channel flower.